The chain runs to 499 residues: Glycerol kinase (499 aa).

Position 13 (threonine 13) interacts with ADP. Residues threonine 13, threonine 14, and serine 15 each coordinate ATP. Threonine 13 is a binding site for sn-glycerol 3-phosphate. Arginine 17 serves as a coordination point for ADP. The sn-glycerol 3-phosphate site is built by arginine 83, glutamate 84, tyrosine 135, and aspartate 245. Residues arginine 83, glutamate 84, tyrosine 135, aspartate 245, and glutamine 246 each coordinate glycerol. Residues threonine 267 and glycine 310 each coordinate ADP. ATP-binding residues include threonine 267, glycine 310, glutamine 314, and glycine 411. ADP contacts are provided by glycine 411 and asparagine 415.

Belongs to the FGGY kinase family. Homotetramer and homodimer (in equilibrium).

The catalysed reaction is glycerol + ATP = sn-glycerol 3-phosphate + ADP + H(+). It functions in the pathway polyol metabolism; glycerol degradation via glycerol kinase pathway; sn-glycerol 3-phosphate from glycerol: step 1/1. With respect to regulation, activated by phosphorylation and inhibited by fructose 1,6-bisphosphate (FBP). Functionally, key enzyme in the regulation of glycerol uptake and metabolism. Catalyzes the phosphorylation of glycerol to yield sn-glycerol 3-phosphate. In Halothermothrix orenii (strain H 168 / OCM 544 / DSM 9562), this protein is Glycerol kinase.